We begin with the raw amino-acid sequence, 346 residues long: Beta-ketoacyl-[acyl-carrier-protein] synthase III (346 aa).

Catalysis depends on residues Cys-120 and His-256. The interval 257 to 261 (QANIR) is ACP-binding. Asn-286 is a catalytic residue.

Belongs to the thiolase-like superfamily. FabH family. As to quaternary structure, homodimer.

It is found in the cytoplasm. It catalyses the reaction malonyl-[ACP] + acetyl-CoA + H(+) = 3-oxobutanoyl-[ACP] + CO2 + CoA. Its pathway is lipid metabolism; fatty acid biosynthesis. Its function is as follows. Catalyzes the condensation reaction of fatty acid synthesis by the addition to an acyl acceptor of two carbons from malonyl-ACP. Catalyzes the first condensation reaction which initiates fatty acid synthesis and may therefore play a role in governing the total rate of fatty acid production. Possesses both acetoacetyl-ACP synthase and acetyl transacylase activities. Its substrate specificity determines the biosynthesis of branched-chain and/or straight-chain of fatty acids. This is Beta-ketoacyl-[acyl-carrier-protein] synthase III from Deinococcus geothermalis (strain DSM 11300 / CIP 105573 / AG-3a).